The primary structure comprises 366 residues: Terpene cyclase atmA (366 aa).

The next 8 membrane-spanning stretches (helical) occupy residues 9–29 (FLLLAMTSFYMMYISLFNNGF), 84–104 (LTGLSFSGGMVGIWMIVVVHI), 113–133 (GMVITLIVGIAQQAVGPGIVI), 162–182 (GLVVSMIMSYIFPLVIMSLPA), 195–215 (IAAWQGWPVYFVIIMTTHHLF), 233–253 (VYHFGFACSCLCHMAWLSAFV), 291–311 (AGLFTFLQWDYCVAAAATMVW), and 333–353 (ILRLLGWILIDGPSATAVRLI).

Belongs to the membrane-bound ascI terpene cyclase family.

Its subcellular location is the membrane. Functionally, aflatrem synthesis protein A; part of the ATM2 gene cluster that mediates the biosynthesis of aflatrem, a tremorgenic mycotoxin with acute neurotoxic effects. Synthesis of geranylgeranyl diphosphate (GGPP) by AtmG (a GGPP synthase) precedes condensation of GGPP with indole 3-glycerol phosphate, followed by epoxidation and cyclization by AtmM (a FAD-dependent monooxygenase) and AtmC (a prenyltransferase) to produce paspaline. AtmB is also essential for paspaline production, but its exact role has not been identified yet. AtmP, a cytochrome P450 monooxygenase, subsequently converts paspaline to 13-desoxypaxilline via PC-M6 by removal of the C-30 methyl group and oxidation at C-10. AtmQ, a cytochrome P450 monooxygenase, then catalyzes the oxidation of 13-desoxypaxilline, first at C-7 to produce paspalicine and then at C-13 to form paspalinine. Finally, AtmD prenylates paspalinine to form aflatrem. The role of atmA in the aflatrem biosynthesis is still unknown. The chain is Terpene cyclase atmA from Aspergillus flavus.